The chain runs to 104 residues: Large ribosomal subunit protein uL24 (104 aa).

The protein belongs to the universal ribosomal protein uL24 family. Part of the 50S ribosomal subunit.

In terms of biological role, one of two assembly initiator proteins, it binds directly to the 5'-end of the 23S rRNA, where it nucleates assembly of the 50S subunit. Its function is as follows. One of the proteins that surrounds the polypeptide exit tunnel on the outside of the subunit. This Alteromonas mediterranea (strain DSM 17117 / CIP 110805 / LMG 28347 / Deep ecotype) protein is Large ribosomal subunit protein uL24.